Here is a 91-residue protein sequence, read N- to C-terminus: Cell division topological specificity factor (91 aa).

The protein belongs to the MinE family.

Prevents the cell division inhibition by proteins MinC and MinD at internal division sites while permitting inhibition at polar sites. This ensures cell division at the proper site by restricting the formation of a division septum at the midpoint of the long axis of the cell. The polypeptide is Cell division topological specificity factor (Bradyrhizobium sp. (strain BTAi1 / ATCC BAA-1182)).